The primary structure comprises 137 residues: Interferon-induced transmembrane protein 3 (137 aa).

The Cytoplasmic portion of the chain corresponds to 1-57 (MNHTSQAFITAASGGQPPNYERIKEEYEVAEMGAPHGSASVRTTVINMPREVSVPDH). Tyrosine 20 is subject to Phosphotyrosine. Lysine 24 is covalently cross-linked (Glycyl lysine isopeptide (Lys-Gly) (interchain with G-Cter in ubiquitin)). Tyrosine 27 carries the post-translational modification Phosphotyrosine. Positions 58–78 (VVWSLFNTLFMNFCCLGFIAY) form an intramembrane region, helical. The segment at 60 to 93 (WSLFNTLFMNFCCLGFIAYAYSVKSRDRKMVGDV) is interaction with SPP1. Residues cysteine 71 and cysteine 72 are each lipidated (S-palmitoyl cysteine). Residues 79–109 (AYSVKSRDRKMVGDVTGAQAYASTAKCLNIS) lie on the Cytoplasmic side of the membrane. Glycyl lysine isopeptide (Lys-Gly) (interchain with G-Cter in ubiquitin) cross-links involve residues lysine 83, lysine 88, and lysine 104. A lipid anchor (S-palmitoyl cysteine) is attached at cysteine 105. The segment at 108–133 (ISTLVLSILMVVITIVSVIIIVLNAQ) is interaction with VAPA. A helical transmembrane segment spans residues 110–130 (TLVLSILMVVITIVSVIIIVL). The Extracellular portion of the chain corresponds to 131 to 137 (NAQNLHT).

This sequence belongs to the CD225/Dispanin family. As to quaternary structure, interacts with ATP6V0B. Interacts with CD81. Interacts with SPP1; the interaction reduces OPN expression. Interacts with BRI3. Polyubiquitinated with both 'Lys-48' and 'Lys-63' linkages. Ubiquitination negatively regulates antiviral activity. Lys-24 is the most prevalent ubiquitination site. Post-translationally, phosphorylation at Tyr-20 is required for endosomal and lysosomal location. In terms of tissue distribution, expressed in acinar cell. Predominantly expressed in nascent primordial germ cells, as well as in gonadal germ cells.

It localises to the cell membrane. Its subcellular location is the late endosome membrane. The protein resides in the early endosome membrane. The protein localises to the lysosome membrane. It is found in the cytoplasm. It localises to the perinuclear region. Its function is as follows. IFN-induced antiviral protein which disrupts intracellular cholesterol homeostasis. Inhibits the entry of viruses to the host cell cytoplasm by preventing viral fusion with cholesterol depleted endosomes. May inactivate new enveloped viruses which buds out of the infected cell, by letting them go out with a cholesterol depleted membrane. Active against multiple viruses, including influenza A virus, SARS coronaviruses (SARS-CoV and SARS-CoV-2), Marburg virus (MARV), Ebola virus (EBOV), Dengue virus (DNV), West Nile virus (WNV), human immunodeficiency virus type 1 (HIV-1), hepatitis C virus (HCV) and vesicular stomatitis virus (VSV). Can inhibit: influenza virus hemagglutinin protein-mediated viral entry, MARV and EBOV GP1,2-mediated viral entry, SARS-CoV and SARS-CoV-2 S protein-mediated viral entry and VSV G protein-mediated viral entry. Plays a critical role in the structural stability and function of vacuolar ATPase (v-ATPase). Establishes physical contact with the v-ATPase of endosomes which is critical for proper clathrin localization and is also required for the function of the v-ATPase to lower the pH in phagocytic endosomes thus establishing an antiviral state. In hepatocytes, IFITM proteins act in a coordinated manner to restrict HCV infection by targeting the endocytosed HCV virion for lysosomal degradation. IFITM2 and IFITM3 display anti-HCV activity that may complement the anti-HCV activity of IFITM1 by inhibiting the late stages of HCV entry, possibly in a coordinated manner by trapping the virion in the endosomal pathway and targeting it for degradation at the lysosome. Exerts opposing activities on SARS-CoV-2, including amphipathicity-dependent restriction of virus at endosomes and amphipathicity-independent enhancement of infection at the plasma membrane. The chain is Interferon-induced transmembrane protein 3 from Mus musculus (Mouse).